The following is a 171-amino-acid chain: Laminin subunit beta-1 (171 aa).

The first 29 residues, 1–29 (MNGRTQNLWFSTFRLVIVYALFFAKLCFG), serve as a signal peptide directing secretion. Cystine bridges form between Cys59–Cys69, Cys72–Cys81, Cys84–Cys100, Cys103–Cys118, and Cys105–Cys128. 3 consecutive Laminin EGF-like domains span residues 66 to 102 (TGVC…VCQR), 103 to 160 (CQCP…TCKK), and 161 to 171 (CLCNGNINSAS). Residue Asn130 is glycosylated (N-linked (GlcNAc...) asparagine). Cystine bridges form between Cys131–Cys140 and Cys143–Cys158.

As to quaternary structure, laminin is a complex glycoprotein, consisting of three different polypeptide chains (alpha, beta, gamma), which are bound to each other by disulfide bonds into a cross-shaped molecule comprising one long and three short arms with globules at each end.

It is found in the secreted. It localises to the extracellular space. The protein resides in the extracellular matrix. Its subcellular location is the basement membrane. Functionally, binding to cells via a high affinity receptor, laminin is thought to mediate the attachment, migration and organization of cells into tissues during embryonic development by interacting with other extracellular matrix components. This chain is Laminin subunit beta-1, found in Hydra vulgaris (Hydra).